The chain runs to 455 residues: Beta-glucosidase A (455 aa).

Residue glutamate 165 is the Proton donor of the active site. The active-site Nucleophile is the glutamate 363.

Belongs to the glycosyl hydrolase 1 family.

The catalysed reaction is Hydrolysis of terminal, non-reducing beta-D-glucosyl residues with release of beta-D-glucose.. The polypeptide is Beta-glucosidase A (bglA) (Caldicellulosiruptor saccharolyticus (Caldocellum saccharolyticum)).